A 624-amino-acid chain; its full sequence is Bifunctional protein ArgH (624 aa).

Positions 1–466 are argininosuccinate lyase; it reads MALWGGRFTQ…AARDTTLVKV (466 aa). The region spanning 464-614 is the N-acetyltransferase domain; sequence VKVRPARITD…DEVALEFNLS (151 aa). The interval 467-624 is probable acetyltransferase; sequence RPARITDIET…EQIISQVKVA (158 aa).

In the N-terminal section; belongs to the lyase 1 family. Argininosuccinate lyase subfamily.

Its subcellular location is the cytoplasm. The catalysed reaction is 2-(N(omega)-L-arginino)succinate = fumarate + L-arginine. It functions in the pathway amino-acid biosynthesis; L-arginine biosynthesis; L-arginine from L-ornithine and carbamoyl phosphate: step 3/3. The protein is Bifunctional protein ArgH (argH) of Vibrio vulnificus (strain CMCP6).